Here is a 161-residue protein sequence, read N- to C-terminus: M-phase phosphoprotein 6 (161 aa).

Glycyl lysine isopeptide (Lys-Gly) (interchain with G-Cter in SUMO2) cross-links involve residues Lys37 and Lys86. A Phosphoserine modification is found at Ser111. The Nuclear localization signal motif lies at 117–134; sequence RRYETLVGTIGKKFVKKR. Glycyl lysine isopeptide (Lys-Gly) (interchain with G-Cter in SUMO2) cross-links involve residues Lys128, Lys151, and Lys154.

It belongs to the MPP6 family. In terms of assembly, associates with the RNA exosome complex, mediated by EXOSC3. Interacts with ARHGAP18. Interacts with exosome cofactors EXOSC10 and MTREX. Phosphorylated in M (mitotic) phase.

It localises to the nucleus. The protein localises to the nucleolus. The protein resides in the cytoplasm. Functionally, RNA-binding protein that associates with the RNA exosome complex. Involved in the 3'-processing of the 7S pre-RNA to the mature 5.8S rRNA and plays a role in recruiting the RNA exosome complex to pre-rRNA; this function may include C1D. The polypeptide is M-phase phosphoprotein 6 (Mus musculus (Mouse)).